The sequence spans 422 residues: MEYNTILNNTSKTRVCYFFDQDVGNYFYGPYHPMKPHRLCLTNNLVLNYGLHKKMHLYKARPADAEDMLKFHSEDYVDFLERVTPENINEWKDVKRFHIGEDCPVFPGLYDYCSIYSGGSIEGALKLNHRMYDIAINWSGGLHHARKDEASGFCYVNDIVLAILELLKFHARVLYIDIDVHHGDGVQEAFYLTDRVMTVSFHKFGGDFFPGTGDIDEIGAKTGKLYSVNVPLADGIDDKNYLNIFKPVIQGVMDYYRPSVIVLQCGADSLRFDRLGCFNLTIKGHAECVRFVKSFNIPTLVLGGGGYTVRNVARCWTYETSVCVDTEVNNELPYNDYIQFYSPDFQLIPDYTGLPFKYENANTKSYLESLRIKILENLRILQWAPSVQIQDVPPDIMPIDFDRDEDSKENMDKRKKKHNDFS.

Substrate is bound at residue Asp-102. His-144 functions as the Proton acceptor in the catalytic mechanism. Gly-152 is a binding site for substrate. Residues Asp-179, His-181, and Asp-268 each coordinate a divalent metal cation. Tyr-307 provides a ligand contact to substrate. The disordered stretch occupies residues 399-422 (IDFDRDEDSKENMDKRKKKHNDFS). The span at 413–422 (KRKKKHNDFS) shows a compositional bias: basic residues.

This sequence belongs to the histone deacetylase family. HD type 1 subfamily.

The protein resides in the nucleus. Its subcellular location is the cytoplasm. The enzyme catalyses N(6)-acetyl-L-lysyl-[histone] + H2O = L-lysyl-[histone] + acetate. Its activity is regulated as follows. Its activity is inhibited by trichostatin A (TSA), a well known histone deacetylase inhibitor. Cytosolic activity is refractory to inhibition by TSA, while the nuclear activity is inhibited completely. Its function is as follows. Responsible for the deacetylation of lysine residues on the N-terminal part of the core histones (H2A, H2B, H3 and H4). Histone deacetylation plays an important role in transcriptional regulation, cell cycle progression and developmental events. Histone deacetylases act via the formation of large multiprotein complexes. May play a role in the regulation of the timing of gene expression during the development and in the definition aspects of the phenotype that mediate social behavior in genetically heterogeneous groups. The sequence is that of Histone deacetylase B (hdaB) from Dictyostelium discoideum (Social amoeba).